The following is an 83-amino-acid chain: Greglin (83 aa).

3 positions are modified to phosphoserine: S8, S11, and S15. Intrachain disulfides connect C21–C55, C25–C48, C33–C69, and C53–C76.

In terms of biological role, serine protease inhibitor. Inhibits porcine pancreatic elastase with a Ki of 58.3 nM, human neutrophil elastase with a Ki of 3.6 nM, cathepsin G with a Ki of 153.5 nM, chymotrypsin with a Ki of 26.7 nM and subtilisin with a Ki of 0.68 nM. Does not inhibit neutrophil protease 3 or pancreatic trypsin. The chain is Greglin from Schistocerca gregaria (Desert locust).